We begin with the raw amino-acid sequence, 175 residues long: Sialidase 85-1.3 (175 aa).

The protein belongs to the glycosyl hydrolase 33 family.

The enzyme catalyses Hydrolysis of alpha-(2-&gt;3)-, alpha-(2-&gt;6)-, alpha-(2-&gt;8)- glycosidic linkages of terminal sialic acid residues in oligosaccharides, glycoproteins, glycolipids, colominic acid and synthetic substrates.. In terms of biological role, developmentally regulated neuraminidase implicated in parasite invasion of cells. May contribute to the pathology during T.cruzi infection by cleaving sialic acid from cells of the immune system. The sequence is that of Sialidase 85-1.3 (SA85-1.3) from Trypanosoma cruzi.